A 310-amino-acid polypeptide reads, in one-letter code: MKVLWPALVVTLLAGCRADVEPGPEVQLGKEWATWQASQPWEQALGRFWNYLRWVQTLSEQVQEELLSSQVTEELTALMDDTMKEVKACKSELEEQLGPVAEETKARVSKELQAAQARLGADMEEVRNRLAQYRGELQAMVGQSTEELRGRLNAHLRKLRKRLLRDAEDLQQRLAVYQAGIREGAERSVNTLREHLGPLAEQAATMHTLVSKPLQERAEAWAQRLRGRLEKAGFPVGDRLDEVREQVQEVRAKVEEQANQVRLQAEAFQGRLKSWFEPLVQDMQQKWAELVEKVQLALRAVPTSVPSEKQ.

The first 18 residues, 1-18 (MKVLWPALVVTLLAGCRA), serve as a signal peptide directing secretion. 8 tandem repeats follow at residues 77–98 (ALMD…EQLG), 99–120 (PVAE…ARLG), 121–142 (ADME…AMVG), 143–164 (QSTE…KRLL), 165–186 (RDAE…EGAE), 187–208 (RSVN…TMHT), 209–226 (LVSK…QRLR), and 227–248 (GRLE…EQVQ). The segment at 77–248 (ALMDDTMKEV…RLDEVREQVQ (172 aa)) is 8 X 22 AA approximate tandem repeats. Residues 155–165 (HLRKLRKRLLR) are LDL and other lipoprotein receptors binding. 159–162 (LRKR) lines the heparin pocket. The segment at 207-283 (HTLVSKPLQE…SWFEPLVQDM (77 aa)) is lipid-binding and lipoprotein association. 222–229 (AQRLRGRL) is a binding site for heparin. Residues 259–310 (NQVRLQAEAFQGRLKSWFEPLVQDMQQKWAELVEKVQLALRAVPTSVPSEKQ) form a homooligomerization region. The interval 271–283 (RLKSWFEPLVQDM) is specificity for association with VLDL.

It belongs to the apolipoprotein A1/A4/E family. As to quaternary structure, homotetramer. May interact with ABCA1; functionally associated with ABCA1 in the biogenesis of HDLs. May interact with APP/A4 amyloid-beta peptide; the interaction is extremely stable in vitro but its physiological significance is unclear. May interact with MAPT. May interact with MAP2. In the cerebrospinal fluid, interacts with secreted SORL1. Interacts with PMEL; this allows the loading of PMEL luminal fragment on ILVs to induce fibril nucleation. Post-translationally, APOE exists as multiple glycosylated and sialylated glycoforms within cells and in plasma. The extent of glycosylation and sialylation are tissue and context specific. Glycated in plasma VLDL. In terms of processing, phosphorylated by FAM20C in the extracellular medium.

Its subcellular location is the secreted. The protein resides in the extracellular space. It localises to the extracellular matrix. It is found in the extracellular vesicle. The protein localises to the endosome. Its subcellular location is the multivesicular body. Functionally, APOE is an apolipoprotein, a protein associating with lipid particles, that mainly functions in lipoprotein-mediated lipid transport between organs via the plasma and interstitial fluids. APOE is a core component of plasma lipoproteins and is involved in their production, conversion and clearance. Apolipoproteins are amphipathic molecules that interact both with lipids of the lipoprotein particle core and the aqueous environment of the plasma. As such, APOE associates with chylomicrons, chylomicron remnants, very low density lipoproteins (VLDL) and intermediate density lipoproteins (IDL) but shows a preferential binding to high-density lipoproteins (HDL). It also binds a wide range of cellular receptors including the LDL receptor/LDLR and the very low-density lipoprotein receptor/VLDLR that mediate the cellular uptake of the APOE-containing lipoprotein particles. Finally, APOE also has a heparin-binding activity and binds heparan-sulfate proteoglycans on the surface of cells, a property that supports the capture and the receptor-mediated uptake of APOE-containing lipoproteins by cells. The chain is Apolipoprotein E (APOE) from Dicerorhinus sumatrensis harrissoni (Bornean rhinoceros).